Reading from the N-terminus, the 338-residue chain is DNA-directed RNA polymerase subunit alpha (338 aa).

The alpha N-terminal domain (alpha-NTD) stretch occupies residues 1–230; that stretch reads MRKITTSAYM…QQMSVFKGIL (230 aa). The interval 247–338 is alpha C-terminal domain (alpha-CTD); sequence FSKLLSSVED…ELKSQMSAKE (92 aa).

It belongs to the RNA polymerase alpha chain family. In terms of assembly, homodimer. The RNAP catalytic core consists of 2 alpha, 1 beta, 1 beta' and 1 omega subunit. When a sigma factor is associated with the core the holoenzyme is formed, which can initiate transcription.

The catalysed reaction is RNA(n) + a ribonucleoside 5'-triphosphate = RNA(n+1) + diphosphate. DNA-dependent RNA polymerase catalyzes the transcription of DNA into RNA using the four ribonucleoside triphosphates as substrates. The chain is DNA-directed RNA polymerase subunit alpha from Campylobacter concisus (strain 13826).